A 377-amino-acid polypeptide reads, in one-letter code: Succinyl-diaminopimelate desuccinylase (377 aa).

A Zn(2+)-binding site is contributed by H67. The active site involves D69. D100 is a binding site for Zn(2+). The Proton acceptor role is filled by E134. Residues E135, E163, and H349 each coordinate Zn(2+).

This sequence belongs to the peptidase M20A family. DapE subfamily. As to quaternary structure, homodimer. Zn(2+) serves as cofactor. It depends on Co(2+) as a cofactor.

It carries out the reaction N-succinyl-(2S,6S)-2,6-diaminopimelate + H2O = (2S,6S)-2,6-diaminopimelate + succinate. Its pathway is amino-acid biosynthesis; L-lysine biosynthesis via DAP pathway; LL-2,6-diaminopimelate from (S)-tetrahydrodipicolinate (succinylase route): step 3/3. Functionally, catalyzes the hydrolysis of N-succinyl-L,L-diaminopimelic acid (SDAP), forming succinate and LL-2,6-diaminopimelate (DAP), an intermediate involved in the bacterial biosynthesis of lysine and meso-diaminopimelic acid, an essential component of bacterial cell walls. The chain is Succinyl-diaminopimelate desuccinylase from Actinobacillus pleuropneumoniae serotype 5b (strain L20).